We begin with the raw amino-acid sequence, 266 residues long: Endoplasmic reticulum vesicle protein 25 (266 aa).

Positions 1 to 26 (MGSSPQSSTRTLLGLLFLLLVQLSSA) are cleaved as a signal peptide. Topologically, residues 27 to 188 (LKFDLHASSG…TNESTNERVK (162 aa)) are lumenal. The 91-residue stretch at 39-129 (ERCIRNFVFK…YKSVELDVEI (91 aa)) folds into the GOLD domain. A helical transmembrane segment spans residues 189 to 209 (WFAFGTMGMLVGLGVWQVVYL). Residues 210–266 (RAYFRYVDFPVSWRVDGVVANCCSCCEQVEASYLRSSRVVFWSPLVMWTRLSWLILR) lie on the Cytoplasmic side of the membrane.

It belongs to the EMP24/GP25L family.

The protein resides in the endoplasmic reticulum membrane. Its subcellular location is the golgi apparatus membrane. Its function is as follows. Constituent of COPII-coated endoplasmic reticulum-derived transport vesicles. Required for efficient transport of a subset of secretory proteins to the Golgi. Facilitates retrograde transport from the Golgi to the endoplasmic reticulum. The sequence is that of Endoplasmic reticulum vesicle protein 25 (erv25) from Aspergillus fumigatus (strain ATCC MYA-4609 / CBS 101355 / FGSC A1100 / Af293) (Neosartorya fumigata).